Here is a 254-residue protein sequence, read N- to C-terminus: MVSNIDHKAMEALLRGQGCANNLKILLENGEISSVSTEPLIHTILDSFSLALSFMDSPNHPPYHESSSHNMASHMSRRSSKQVQHRRKLCVAEGLVNYNHDSRTMCPNDGFTWRKYGQKTIKASAHKRCYYRCTYAKDQNCNATKRVQKIKDNPPVYRTTYLGKHVCKAFAVHDDTYSSTMIRFDQVVPEPIMPQLTTIDHQVITVEENSAEHIMNQECDINDYLVDDDPFWASQFPPFPSSDTMFLENISAFD.

Residues 102-170 (SRTMCPNDGF…YLGKHVCKAF (69 aa)) constitute a DNA-binding region (WRKY).

Belongs to the WRKY group III family.

It localises to the nucleus. In terms of biological role, transcription factor. Interacts specifically with the W box (5'-(T)TGAC[CT]-3'), a frequently occurring elicitor-responsive cis-acting element. This Arabidopsis thaliana (Mouse-ear cress) protein is Probable WRKY transcription factor 67 (WRKY67).